The sequence spans 300 residues: Taste receptor type 2 member 105 (300 aa).

Residues 1-7 (MLSAAEG) lie on the Extracellular side of the membrane. A helical transmembrane segment spans residues 8–28 (ILLSIATVEAGLGVLGNTFIA). Topologically, residues 29-43 (LVNCMDWAKNNKLSM) are cytoplasmic. The chain crosses the membrane as a helical span at residues 44-64 (TGFLLIGLATSRIFIVWLLTL). Over 65–87 (DAYAKLFYPSKYFSSSLIEIISY) the chain is Extracellular. Residues 88–108 (IWMTVNHLTVWFATSLSIFYF) form a helical membrane-spanning segment. Residues 109-128 (LKIANFSDCVFLWLKRRTDK) lie on the Cytoplasmic side of the membrane. The helical transmembrane segment at 129 to 149 (AFVFLLGCLLTSWVISFSFVV) threads the bilayer. Over 150–181 (KVMKDGKVNHRNRTSEMYWEKRQFTINYVFLN) the chain is Extracellular. Asn161 carries N-linked (GlcNAc...) asparagine glycosylation. A helical transmembrane segment spans residues 182-202 (IGVISLFMMTLTACFLLIMSL). Over 203-233 (WRHSRQMQSGVSGFRDLNTEAHVKAIKFLIS) the chain is Cytoplasmic. A helical transmembrane segment spans residues 234-254 (FIILFVLYFIGVSIEIICIFI). The Extracellular portion of the chain corresponds to 255–259 (PENKL). The chain crosses the membrane as a helical span at residues 260–280 (LFIFGFTTASIYPCCHSFILI). At 281 to 300 (LSNSQLKQAFVKVLQGLKFF) the chain is on the cytoplasmic side.

This sequence belongs to the G-protein coupled receptor T2R family. As to expression, expressed in subsets of taste receptor cells of the tongue and palate epithelium and exclusively in gustducin-positive cells. Expressed in gastric and duodenal tissues.

The protein resides in the membrane. Its function is as follows. Gustducin-coupled cycloheximide receptor implicated in the perception of bitter compounds in the oral cavity and the gastrointestinal tract. Signals through PLCB2 and the calcium-regulated cation channel TRPM5. The protein is Taste receptor type 2 member 105 (Tas2r105) of Mus musculus (Mouse).